The primary structure comprises 206 residues: Large ribosomal subunit protein uL4 (206 aa).

The disordered stretch occupies residues 43–78; it reads NQRQGTHDTKTRAEVRGGGRKPWRQKGTGRARAGSS. The segment covering 47 to 59 has biased composition (basic and acidic residues); that stretch reads GTHDTKTRAEVRG. Residues 60–71 are compositionally biased toward basic residues; it reads GGRKPWRQKGTG.

The protein belongs to the universal ribosomal protein uL4 family. In terms of assembly, part of the 50S ribosomal subunit.

One of the primary rRNA binding proteins, this protein initially binds near the 5'-end of the 23S rRNA. It is important during the early stages of 50S assembly. It makes multiple contacts with different domains of the 23S rRNA in the assembled 50S subunit and ribosome. Its function is as follows. Forms part of the polypeptide exit tunnel. The protein is Large ribosomal subunit protein uL4 of Desulforamulus reducens (strain ATCC BAA-1160 / DSM 100696 / MI-1) (Desulfotomaculum reducens).